A 395-amino-acid polypeptide reads, in one-letter code: Endophilin-B2 (395 aa).

N-acetylmethionine is present on M1. The interval 1 to 27 is membrane-binding amphipathic helix; the sequence is MDFNMKKLASDAGIFFTRAVQFTEEKF. A Phosphoserine modification is found at S10. In terms of domain architecture, BAR spans 24-287; it reads EEKFGQAEKT…LGRFPGTFVG (264 aa). Coiled-coil stretches lie at residues 116-132 and 206-240; these read IKVA…ERDF and ASAL…LLLE. In terms of domain architecture, SH3 spans 335–395; it reads SGTRKARVLY…VPVTYLELLS (61 aa). The residue at position 395 (S395) is a Phosphoserine.

Belongs to the endophilin family. In terms of assembly, homodimer, and heterodimer with SH3GLB1. As to expression, detected in skeletal muscle, adipocyte, brain, lung, colon and mammary gland.

The protein localises to the cytoplasm. This chain is Endophilin-B2 (SH3GLB2), found in Homo sapiens (Human).